Consider the following 187-residue polypeptide: Small ribosomal subunit protein uS4 (187 aa).

An S4 RNA-binding domain is found at 105-174 (RRLQTLVFRK…DNHPERAKIV (70 aa)).

The protein belongs to the universal ribosomal protein uS4 family. As to quaternary structure, part of the 30S ribosomal subunit. Contacts protein S5. The interaction surface between S4 and S5 is involved in control of translational fidelity.

Its function is as follows. One of the primary rRNA binding proteins, it binds directly to 16S rRNA where it nucleates assembly of the body of the 30S subunit. In terms of biological role, with S5 and S12 plays an important role in translational accuracy. In Methanocaldococcus jannaschii (strain ATCC 43067 / DSM 2661 / JAL-1 / JCM 10045 / NBRC 100440) (Methanococcus jannaschii), this protein is Small ribosomal subunit protein uS4.